A 110-amino-acid chain; its full sequence is UPF0060 membrane protein Noc_2955 (110 aa).

4 consecutive transmembrane segments (helical) span residues 7 to 27, 33 to 53, 63 to 83, and 87 to 107; these read VGLFLITALAEIAGCYLAYLW, TIWLLVPCALSLVAFVWLLSL, AAYGGVYIVMAILWLWVVNGI, and TWDLVGSAIALLGMAIIMFAP.

It belongs to the UPF0060 family.

The protein localises to the cell inner membrane. The protein is UPF0060 membrane protein Noc_2955 of Nitrosococcus oceani (strain ATCC 19707 / BCRC 17464 / JCM 30415 / NCIMB 11848 / C-107).